A 364-amino-acid polypeptide reads, in one-letter code: UDP-N-acetylglucosamine--N-acetylmuramyl-(pentapeptide) pyrophosphoryl-undecaprenol N-acetylglucosamine transferase (364 aa).

UDP-N-acetyl-alpha-D-glucosamine is bound by residues 10 to 12 (TGG), asparagine 124, arginine 166, serine 196, and glutamine 297.

Belongs to the glycosyltransferase 28 family. MurG subfamily.

The protein localises to the cell membrane. The catalysed reaction is di-trans,octa-cis-undecaprenyl diphospho-N-acetyl-alpha-D-muramoyl-L-alanyl-D-glutamyl-meso-2,6-diaminopimeloyl-D-alanyl-D-alanine + UDP-N-acetyl-alpha-D-glucosamine = di-trans,octa-cis-undecaprenyl diphospho-[N-acetyl-alpha-D-glucosaminyl-(1-&gt;4)]-N-acetyl-alpha-D-muramoyl-L-alanyl-D-glutamyl-meso-2,6-diaminopimeloyl-D-alanyl-D-alanine + UDP + H(+). The protein operates within cell wall biogenesis; peptidoglycan biosynthesis. Cell wall formation. Catalyzes the transfer of a GlcNAc subunit on undecaprenyl-pyrophosphoryl-MurNAc-pentapeptide (lipid intermediate I) to form undecaprenyl-pyrophosphoryl-MurNAc-(pentapeptide)GlcNAc (lipid intermediate II). The sequence is that of UDP-N-acetylglucosamine--N-acetylmuramyl-(pentapeptide) pyrophosphoryl-undecaprenol N-acetylglucosamine transferase from Thermoanaerobacter pseudethanolicus (strain ATCC 33223 / 39E) (Clostridium thermohydrosulfuricum).